The sequence spans 360 residues: Phospho-N-acetylmuramoyl-pentapeptide-transferase (360 aa).

10 helical membrane passes run 26–46, 73–93, 97–117, 132–152, 168–188, 199–219, 236–256, 263–283, 288–308, and 338–358; these read AILG…KMIA, TMGG…WGDL, YVWV…IDDY, WKYL…YASA, VMPQ…VGSS, GLAI…AYLS, AGEL…FLWF, VFMG…IAVL, ILLV…ILQV, and VIVR…ATLK.

This sequence belongs to the glycosyltransferase 4 family. MraY subfamily. It depends on Mg(2+) as a cofactor.

The protein localises to the cell inner membrane. It carries out the reaction UDP-N-acetyl-alpha-D-muramoyl-L-alanyl-gamma-D-glutamyl-meso-2,6-diaminopimeloyl-D-alanyl-D-alanine + di-trans,octa-cis-undecaprenyl phosphate = di-trans,octa-cis-undecaprenyl diphospho-N-acetyl-alpha-D-muramoyl-L-alanyl-D-glutamyl-meso-2,6-diaminopimeloyl-D-alanyl-D-alanine + UMP. Its pathway is cell wall biogenesis; peptidoglycan biosynthesis. Functionally, catalyzes the initial step of the lipid cycle reactions in the biosynthesis of the cell wall peptidoglycan: transfers peptidoglycan precursor phospho-MurNAc-pentapeptide from UDP-MurNAc-pentapeptide onto the lipid carrier undecaprenyl phosphate, yielding undecaprenyl-pyrophosphoryl-MurNAc-pentapeptide, known as lipid I. The chain is Phospho-N-acetylmuramoyl-pentapeptide-transferase from Shewanella halifaxensis (strain HAW-EB4).